A 94-amino-acid polypeptide reads, in one-letter code: Small ribosomal subunit protein bS6 (94 aa).

Belongs to the bacterial ribosomal protein bS6 family.

In terms of biological role, binds together with bS18 to 16S ribosomal RNA. This chain is Small ribosomal subunit protein bS6, found in Fusobacterium nucleatum subsp. nucleatum (strain ATCC 25586 / DSM 15643 / BCRC 10681 / CIP 101130 / JCM 8532 / KCTC 2640 / LMG 13131 / VPI 4355).